We begin with the raw amino-acid sequence, 140 residues long: 3-hydroxyacyl-[acyl-carrier-protein] dehydratase FabZ (140 aa).

His47 is an active-site residue.

Belongs to the thioester dehydratase family. FabZ subfamily.

Its subcellular location is the cytoplasm. It catalyses the reaction a (3R)-hydroxyacyl-[ACP] = a (2E)-enoyl-[ACP] + H2O. In terms of biological role, involved in unsaturated fatty acids biosynthesis. Catalyzes the dehydration of short chain beta-hydroxyacyl-ACPs and long chain saturated and unsaturated beta-hydroxyacyl-ACPs. This Streptococcus pneumoniae serotype 2 (strain D39 / NCTC 7466) protein is 3-hydroxyacyl-[acyl-carrier-protein] dehydratase FabZ.